A 96-amino-acid polypeptide reads, in one-letter code: Small ribosomal subunit protein uS17 (96 aa).

This sequence belongs to the universal ribosomal protein uS17 family. Part of the 30S ribosomal subunit.

Functionally, one of the primary rRNA binding proteins, it binds specifically to the 5'-end of 16S ribosomal RNA. In Deinococcus radiodurans (strain ATCC 13939 / DSM 20539 / JCM 16871 / CCUG 27074 / LMG 4051 / NBRC 15346 / NCIMB 9279 / VKM B-1422 / R1), this protein is Small ribosomal subunit protein uS17.